Consider the following 642-residue polypeptide: 5-aminolevulinate synthase, non-specific, mitochondrial (642 aa).

Residues 1-56 (METVVRRCPFLSRVPQAFLQKAGKSLLFYAQNCPKMMEVGAKPAPRTVSTSAAQCQ) constitute a mitochondrion transit peptide. The interval 51 to 109 (SAAQCQQVKETPPANEKEKTAKAAVQQAPDESQMAQTPDGTQLPPGHPSPSTSQSSGSK) is disordered. Residues 79–90 (PDESQMAQTPDG) are compositionally biased toward polar residues. Residues 99-108 (SPSTSQSSGS) show a composition bias toward low complexity. Substrate-binding residues include arginine 219, serine 336, and lysine 355. Residues serine 388, histidine 416, and threonine 444 each coordinate pyridoxal 5'-phosphate. Lysine 447 is a catalytic residue. Position 447 is an N6-(pyridoxal phosphate)lysine (lysine 447). The pyridoxal 5'-phosphate site is built by threonine 476 and threonine 477. Threonine 564 provides a ligand contact to substrate. Residue proline 578 is modified to Hydroxyproline.

This sequence belongs to the class-II pyridoxal-phosphate-dependent aminotransferase family. In terms of assembly, homodimer. Interacts (hydroxylated form) with VHL. The cofactor is pyridoxal 5'-phosphate. In normoxia, is hydroxylated at Pro-578, promoting interaction with VHL, initiating ubiquitination and subsequent degradation via the proteasome. In terms of processing, ubiquitinated; in normoxia following hydroxylation and interaction with VHL, leading to its subsequent degradation via the proteasome. As to expression, expressed in the liver, kidney, brain and testis.

Its subcellular location is the mitochondrion inner membrane. The enzyme catalyses succinyl-CoA + glycine + H(+) = 5-aminolevulinate + CO2 + CoA. Its pathway is porphyrin-containing compound metabolism; protoporphyrin-IX biosynthesis; 5-aminolevulinate from glycine: step 1/1. In terms of biological role, catalyzes the pyridoxal 5'-phosphate (PLP)-dependent condensation of succinyl-CoA and glycine to form aminolevulinic acid (ALA), with CoA and CO2 as by-products. This chain is 5-aminolevulinate synthase, non-specific, mitochondrial (Alas1), found in Rattus norvegicus (Rat).